The following is a 254-amino-acid chain: Trypsin 3A1 (254 aa).

A signal peptide spans 1-20; sequence MNQFLFVSFCALLGLSQVSA. The propeptide at 21 to 27 is activation peptide; sequence ATLSSGR. The Peptidase S1 domain maps to 28–253; that stretch reads IVGGFQIDIA…VRQWIREVSE (226 aa). A disulfide bridge connects residues cysteine 53 and cysteine 69. Catalysis depends on charge relay system residues histidine 68 and aspartate 113. Disulfide bonds link cysteine 178-cysteine 194 and cysteine 205-cysteine 229. Serine 209 (charge relay system) is an active-site residue.

This sequence belongs to the peptidase S1 family. As to expression, midgut.

Its subcellular location is the secreted. The protein resides in the extracellular space. It carries out the reaction Preferential cleavage: Arg-|-Xaa, Lys-|-Xaa.. Major function may be to aid in digestion of the blood meal. This Aedes aegypti (Yellowfever mosquito) protein is Trypsin 3A1.